Reading from the N-terminus, the 333-residue chain is Mevalonate kinase (333 aa).

109 to 119 (PVGAGLGSSAA) contributes to the ATP binding site. The active-site Proton acceptor is aspartate 160.

The protein belongs to the GHMP kinase family. Mevalonate kinase subfamily. As to quaternary structure, homodimer. The cofactor is Mg(2+).

Its subcellular location is the cytoplasm. It catalyses the reaction (R)-mevalonate + ATP = (R)-5-phosphomevalonate + ADP + H(+). The protein operates within isoprenoid biosynthesis; isopentenyl diphosphate biosynthesis via mevalonate pathway; isopentenyl diphosphate from (R)-mevalonate: step 1/3. Catalyzes the phosphorylation of (R)-mevalonate (MVA) to (R)-mevalonate 5-phosphate (MVAP). Functions in the mevalonate (MVA) pathway leading to isopentenyl diphosphate (IPP), a key precursor for the biosynthesis of isoprenoid compounds such as archaeal membrane lipids. The chain is Mevalonate kinase from Thermococcus sibiricus (strain DSM 12597 / MM 739).